Here is a 337-residue protein sequence, read N- to C-terminus: Glyceraldehyde-3-phosphate dehydrogenase (337 aa).

NAD(+)-binding positions include 12–13, D34, and K79; that span reads RI. Residues 150–152, T181, 210–211, and R233 contribute to the D-glyceraldehyde 3-phosphate site; these read SCT and TG. C151 functions as the Nucleophile in the catalytic mechanism. NAD(+) is bound at residue N315.

The protein belongs to the glyceraldehyde-3-phosphate dehydrogenase family. In terms of assembly, homotetramer.

Its subcellular location is the cytoplasm. It catalyses the reaction D-glyceraldehyde 3-phosphate + phosphate + NAD(+) = (2R)-3-phospho-glyceroyl phosphate + NADH + H(+). It functions in the pathway carbohydrate degradation; glycolysis; pyruvate from D-glyceraldehyde 3-phosphate: step 1/5. The polypeptide is Glyceraldehyde-3-phosphate dehydrogenase (GPD) (Cochliobolus lunatus (Filamentous fungus)).